Here is a 341-residue protein sequence, read N- to C-terminus: Barley B recombinant-like protein A (341 aa).

A compositionally biased stretch (basic residues) spans 48 to 62; it reads HQHQQHVPHHHHQPH. Disordered stretches follow at residues 48–95 and 150–234; these read HQHQ…MNFA and MQQQ…RKNI. The span at 68-77 shows a compositional bias: low complexity; sequence GANGNANGGA. Residues 78 to 90 show a composition bias toward pro residues; the sequence is MPPPPATEAPPSM. The span at 190 to 211 shows a compositional bias: basic residues; it reads PKKRQQGRQPKVPRAKKPKKSA.

The protein belongs to the BBR/BPC family.

Its subcellular location is the nucleus. In terms of biological role, transcriptional regulator that specifically binds to GA-rich elements (GAGA-repeats) present in regulatory sequences of genes involved in developmental processes. The sequence is that of Barley B recombinant-like protein A from Oryza sativa subsp. japonica (Rice).